The primary structure comprises 64 residues: Prokaryotic ubiquitin-like protein Pup (64 aa).

Positions 20–58 are ARC ATPase binding; it reads QELTLAASHVVSDVSEVDDLLDEIDGLLAENAEDFVTGF. E64 is covalently cross-linked (Isoglutamyl lysine isopeptide (Glu-Lys) (interchain with K-? in acceptor proteins)).

Belongs to the prokaryotic ubiquitin-like protein family. As to quaternary structure, strongly interacts with the proteasome-associated ATPase ARC through a hydrophobic interface; the interacting region of Pup lies in its C-terminal half. There is one Pup binding site per ARC hexamer ring.

Its pathway is protein degradation; proteasomal Pup-dependent pathway. Functionally, protein modifier that is covalently attached to lysine residues of substrate proteins, thereby targeting them for proteasomal degradation. The tagging system is termed pupylation. The sequence is that of Prokaryotic ubiquitin-like protein Pup from Rothia mucilaginosa (strain DY-18) (Stomatococcus mucilaginosus).